We begin with the raw amino-acid sequence, 928 residues long: MLQRAASNAYSWWWASHIRTKQSKWLEHNLQDMEEKVKYTLKIIDGDGDSFAKRAEMYYRKRPEIVNFVEEAFRSYRALAERYDHLSTELQSANHMIATAFPEHVPFPLVDDDDDDDDDNPKKPPKHLHLIPSGTNIPQVPEVPKKEFKSQSLMVLSRKEPGVLQSSETSSALVSSGLSREEALEEIDKIHKGILVLQTEKEFVRSSYEQSYDRYWNLENEVEEMQKRVCSLQDEFGVGGEIEDGEARTLVATAALSSCKETIAKLEETQKRFSEDAGIEKERIDTATERCEALKKKFEIKVEEQAKKAFHGQESSYESVKESRQIDLNENLSNVDFAEKIDELVEKVVSLETTALSHTALLKTLRSETNELQDHIRDVEKDKACLVSDSMDMKKRITVLEDELRKVKNLFQRVEDQNKNLHKHLTEANSTAKDLSGKLQEVKMDEDVEGDGLNPEDIQEEDTVEDSDSISNEREIKNAEEIKEAMVIKQSRDQESMQEEKSETRDSCGGLSETESTCFGTEAEDEERRNWRQLLPADGMEDREKVLLDEYSSVLRDYREVKRKLSEVEKKNRDGFFELALQLRELKNAVSCEDVDFHFLHQKPELPGQGFPHPVERNRAESVSISHSSNSSFSMPPLPQRGDLKRASEQEKEDGFKVKFAGISDSLRKKIPTVEEKVRGDIDAVLEENIEFWLRFSTSVHQIQKYHTSVQDLKAELSKIESKQQGNAGSSSNTALASEAKPIYRHLREIRTELQLWLENSAILRDELEGRYATLCNIKDEVSRVTSQSGATEVSNTEIRGYQAAKFHGEILNMKQENKRVFNELQAGLDRARALRAEVERVVCKLEENLGILDGTATRSLSKRMPSSAGKPRIPLRSFLFGVKLKKYKQQPKQTSTIFSCVSPSPALNKQCSYIIPPAKLPEYVKRS.

The NAB domain occupies 10–90; it reads YSWWWASHIR…ERYDHLSTEL (81 aa). Positions 108–144 are disordered; the sequence is PLVDDDDDDDDDNPKKPPKHLHLIPSGTNIPQVPEVP. The span at 110–119 shows a compositional bias: acidic residues; that stretch reads VDDDDDDDDD. Coiled-coil stretches lie at residues 207–309 and 360–445; these read SYEQ…AKKA and ALLK…VKMD. 2 disordered regions span residues 447 to 472 and 489 to 529; these read DVEGDGLNPEDIQEEDTVEDSDSISN and KQSR…EERR. Over residues 457-468 the composition is skewed to acidic residues; that stretch reads DIQEEDTVEDSD. Basic and acidic residues predominate over residues 489–506; sequence KQSRDQESMQEEKSETRD. Residues 547–574 are a coiled coil; the sequence is LLDEYSSVLRDYREVKRKLSEVEKKNRD. The segment at 620–651 is disordered; sequence AESVSISHSSNSSFSMPPLPQRGDLKRASEQE. Residues 622–634 show a composition bias toward low complexity; it reads SVSISHSSNSSFS. A compositionally biased stretch (basic and acidic residues) spans 642-651; that stretch reads GDLKRASEQE.

The protein belongs to the NET family.

In terms of biological role, plant-specific actin binding protein. May be part of a membrane-cytoskeletal adapter complex. This Arabidopsis thaliana (Mouse-ear cress) protein is Protein NETWORKED 2B.